A 119-amino-acid chain; its full sequence is Chymotrypsin inhibitor WCI (119 aa).

Cystine bridges form between Cys6–Cys55, Cys20–Cys44, Cys29–Cys87, Cys45–Cys105, and Cys57–Cys116.

Its subcellular location is the secreted. Functionally, inhibits bovine, insect and wheat chymotrypsins. Inhibits bovine chymotrypsin with Ki of 0.6 nM. Does not inhibit human or wheat alpha-amylases, bovine pancreatic trypsin, or trypsin-like activity isolated from wheat. In Triticum aestivum (Wheat), this protein is Chymotrypsin inhibitor WCI.